Reading from the N-terminus, the 235-residue chain is Photosystem I assembly protein Ycf4 (235 aa).

2 helical membrane-spanning segments follow: residues 21–43 (NLCW…TSSY) and 63–85 (GIVM…CTIL).

The protein belongs to the Ycf4 family.

It localises to the plastid. The protein localises to the chloroplast thylakoid membrane. Seems to be required for the assembly of the photosystem I complex. In Amborella trichopoda, this protein is Photosystem I assembly protein Ycf4.